Consider the following 195-residue polypeptide: ATP-dependent Clp protease proteolytic subunit (195 aa).

The Nucleophile role is filled by Ser-99. The active site involves His-124.

It belongs to the peptidase S14 family. As to quaternary structure, fourteen ClpP subunits assemble into 2 heptameric rings which stack back to back to give a disk-like structure with a central cavity, resembling the structure of eukaryotic proteasomes.

The protein resides in the cytoplasm. The enzyme catalyses Hydrolysis of proteins to small peptides in the presence of ATP and magnesium. alpha-casein is the usual test substrate. In the absence of ATP, only oligopeptides shorter than five residues are hydrolyzed (such as succinyl-Leu-Tyr-|-NHMec, and Leu-Tyr-Leu-|-Tyr-Trp, in which cleavage of the -Tyr-|-Leu- and -Tyr-|-Trp bonds also occurs).. Its function is as follows. Cleaves peptides in various proteins in a process that requires ATP hydrolysis. Has a chymotrypsin-like activity. Plays a major role in the degradation of misfolded proteins. The chain is ATP-dependent Clp protease proteolytic subunit from Carboxydothermus hydrogenoformans (strain ATCC BAA-161 / DSM 6008 / Z-2901).